Consider the following 295-residue polypeptide: Light-independent protochlorophyllide reductase iron-sulfur ATP-binding protein (295 aa).

Residues G39–T44 and K68 contribute to the ATP site. S43 provides a ligand contact to Mg(2+). Residues C124 and C158 each contribute to the [4Fe-4S] cluster site. N209–R210 contacts ATP.

This sequence belongs to the NifH/BchL/ChlL family. As to quaternary structure, homodimer. Protochlorophyllide reductase is composed of three subunits; ChlL, ChlN and ChlB. The cofactor is [4Fe-4S] cluster.

It carries out the reaction chlorophyllide a + oxidized 2[4Fe-4S]-[ferredoxin] + 2 ADP + 2 phosphate = protochlorophyllide a + reduced 2[4Fe-4S]-[ferredoxin] + 2 ATP + 2 H2O. It functions in the pathway porphyrin-containing compound metabolism; chlorophyll biosynthesis (light-independent). Functionally, component of the dark-operative protochlorophyllide reductase (DPOR) that uses Mg-ATP and reduced ferredoxin to reduce ring D of protochlorophyllide (Pchlide) to form chlorophyllide a (Chlide). This reaction is light-independent. The L component serves as a unique electron donor to the NB-component of the complex, and binds Mg-ATP. The sequence is that of Light-independent protochlorophyllide reductase iron-sulfur ATP-binding protein from Prochlorococcus marinus (strain MIT 9301).